A 388-amino-acid chain; its full sequence is Succinate--CoA ligase [ADP-forming] subunit beta (388 aa).

The ATP-grasp domain maps to 9-244 (KEILRKFGVA…LDEEDPAEIE (236 aa)). ATP contacts are provided by residues K46, 53 to 55 (GRG), E99, A102, and E107. 2 residues coordinate Mg(2+): N199 and D213. Substrate is bound by residues N264 and 321–323 (GIM).

It belongs to the succinate/malate CoA ligase beta subunit family. In terms of assembly, heterotetramer of two alpha and two beta subunits. Requires Mg(2+) as cofactor.

The enzyme catalyses succinate + ATP + CoA = succinyl-CoA + ADP + phosphate. The catalysed reaction is GTP + succinate + CoA = succinyl-CoA + GDP + phosphate. It participates in carbohydrate metabolism; tricarboxylic acid cycle; succinate from succinyl-CoA (ligase route): step 1/1. In terms of biological role, succinyl-CoA synthetase functions in the citric acid cycle (TCA), coupling the hydrolysis of succinyl-CoA to the synthesis of either ATP or GTP and thus represents the only step of substrate-level phosphorylation in the TCA. The beta subunit provides nucleotide specificity of the enzyme and binds the substrate succinate, while the binding sites for coenzyme A and phosphate are found in the alpha subunit. The chain is Succinate--CoA ligase [ADP-forming] subunit beta from Burkholderia thailandensis (strain ATCC 700388 / DSM 13276 / CCUG 48851 / CIP 106301 / E264).